We begin with the raw amino-acid sequence, 681 residues long: MKRKREIKTWSREIVVGAIKNSFIKLNPLYMYKNPVMFVVEVGTFITLLATIFPTYFGSTPDEVGYNALVTFILFVTVLFANFAESLAEGRGKAQAETLRKTKKETMAKLVQSDGSIKIVKSSELKKGDIVICEAGDIIPADGEIIEGLAAIDESAITGESAPVIKEAGGDFSSVTGGTKVISDRIKIRVTVDEGESFLDRMIKLVEGAKRQKSPNEIALTTVLVSLTIIFIVVVMTLYPMAKFVHVRISAATMIALLVCLIPTTIGGLLSAIGIAGMDRVTRFNVIAMSGKAVEAAGDIDTILLDKTGTITFGNRLAADFIPVGGHSKEEVTYYALISSLKDLTPEGRSIVDLARKMGAKAPDDILEGAEVVEFSAETRMSGLNLKDGTIVRKGSYDKVKEYIGEKGGSIPDDLDKEVEKISLLGGTPLVVVKDNEVLGVIYLKDTIKPGMKERFKQLRAMGIKTIMITGDNPLTAKTIAEEAGVDEFIAESKPEDKINVIKREQAQGRLVAMTGDGTNDAPALAQADVGLAMNSGTMAAKEAANMVDLDSDPTKIIEVVGIGKQLLMTRGALTTFSIANDVAKYFAILPAIISETLPAIKVLDVMKLSSPTNAILSALIYNAIIIPILIPIAMRGVKYRPMSANALLMRNLLIYGLGGLIAPFVGIKLIDMIISSIFGM.

4 helical membrane-spanning segments follow: residues 37 to 57, 64 to 84, 218 to 238, and 255 to 275; these read MFVV…PTYF, VGYN…ANFA, IALT…VMTL, and IALL…AIGI. D306 (4-aspartylphosphate intermediate) is an active-site residue. ATP contacts are provided by residues D343, E347, 375 to 382, and K394; that span reads FSAETRMS. 2 residues coordinate Mg(2+): D517 and D521. Helical transmembrane passes span 573–595, 615–635, and 655–675; these read ALTT…AIIS, AILS…PIAM, and IYGL…DMII.

The protein belongs to the cation transport ATPase (P-type) (TC 3.A.3) family. Type IA subfamily. As to quaternary structure, the system is composed of three essential subunits: KdpA, KdpB and KdpC.

It localises to the cell membrane. The enzyme catalyses K(+)(out) + ATP + H2O = K(+)(in) + ADP + phosphate + H(+). Its function is as follows. Part of the high-affinity ATP-driven potassium transport (or Kdp) system, which catalyzes the hydrolysis of ATP coupled with the electrogenic transport of potassium into the cytoplasm. This subunit is responsible for energy coupling to the transport system and for the release of the potassium ions to the cytoplasm. The chain is Potassium-transporting ATPase ATP-binding subunit from Caldanaerobacter subterraneus subsp. tengcongensis (strain DSM 15242 / JCM 11007 / NBRC 100824 / MB4) (Thermoanaerobacter tengcongensis).